Reading from the N-terminus, the 142-residue chain is Phosphoribosyl-AMP cyclohydrolase (142 aa).

Residue Asp92 participates in Mg(2+) binding. Cys93 provides a ligand contact to Zn(2+). Positions 94 and 96 each coordinate Mg(2+). Zn(2+)-binding residues include Cys109 and Cys116.

The protein belongs to the PRA-CH family. As to quaternary structure, homodimer. Requires Mg(2+) as cofactor. Zn(2+) is required as a cofactor.

The protein localises to the cytoplasm. The enzyme catalyses 1-(5-phospho-beta-D-ribosyl)-5'-AMP + H2O = 1-(5-phospho-beta-D-ribosyl)-5-[(5-phospho-beta-D-ribosylamino)methylideneamino]imidazole-4-carboxamide. It functions in the pathway amino-acid biosynthesis; L-histidine biosynthesis; L-histidine from 5-phospho-alpha-D-ribose 1-diphosphate: step 3/9. Its function is as follows. Catalyzes the hydrolysis of the adenine ring of phosphoribosyl-AMP. The sequence is that of Phosphoribosyl-AMP cyclohydrolase from Alkalilimnicola ehrlichii (strain ATCC BAA-1101 / DSM 17681 / MLHE-1).